A 156-amino-acid polypeptide reads, in one-letter code: uncharacterized protein (156 aa).

This is an uncharacterized protein from Bacillus subtilis (strain 168).